Consider the following 535-residue polypeptide: Bifunctional purine biosynthesis protein PurH (535 aa).

The MGS-like domain maps to 6–151 (TRLPIRRALI…KNHKDVAIVV (146 aa)).

The protein belongs to the PurH family.

The catalysed reaction is (6R)-10-formyltetrahydrofolate + 5-amino-1-(5-phospho-beta-D-ribosyl)imidazole-4-carboxamide = 5-formamido-1-(5-phospho-D-ribosyl)imidazole-4-carboxamide + (6S)-5,6,7,8-tetrahydrofolate. It carries out the reaction IMP + H2O = 5-formamido-1-(5-phospho-D-ribosyl)imidazole-4-carboxamide. It functions in the pathway purine metabolism; IMP biosynthesis via de novo pathway; 5-formamido-1-(5-phospho-D-ribosyl)imidazole-4-carboxamide from 5-amino-1-(5-phospho-D-ribosyl)imidazole-4-carboxamide (10-formyl THF route): step 1/1. The protein operates within purine metabolism; IMP biosynthesis via de novo pathway; IMP from 5-formamido-1-(5-phospho-D-ribosyl)imidazole-4-carboxamide: step 1/1. This is Bifunctional purine biosynthesis protein PurH from Pseudomonas aeruginosa (strain LESB58).